The following is a 2287-amino-acid chain: Protein Ycf2 (2287 aa).

1632–1639 provides a ligand contact to ATP; that stretch reads GSIGTGRS.

Belongs to the Ycf2 family.

It is found in the plastid. The protein resides in the chloroplast stroma. Probable ATPase of unknown function. Its presence in a non-photosynthetic plant (Epifagus virginiana) and experiments in tobacco indicate that it has an essential function which is probably not related to photosynthesis. In Calycanthus floridus var. glaucus (Eastern sweetshrub), this protein is Protein Ycf2.